Consider the following 1301-residue polypeptide: Zinc finger protein 532 (1301 aa).

Disordered stretches follow at residues Pro-26 to Glu-206, Ala-223 to Lys-266, and Lys-281 to Ile-366. Positions Ser-32–His-52 are enriched in basic and acidic residues. Positions Pro-84 to Ser-101 are enriched in polar residues. Over residues Tyr-102 to Lys-111 the composition is skewed to basic and acidic residues. Positions Lys-122 to Ser-133 are enriched in polar residues. A phosphoserine mark is found at Ser-130, Ser-133, and Ser-134. Residues Glu-136–Asp-151 show a composition bias toward acidic residues. Residues Ser-158–Gln-170 show a composition bias toward polar residues. Position 175 is an N6-acetyllysine (Lys-175). Residues Glu-182–Val-195 are compositionally biased toward polar residues. Basic and acidic residues-rich tracts occupy residues Glu-196–Glu-206 and Ala-223–Asp-250. Position 205 is a phosphothreonine (Thr-205). Phosphoserine is present on residues Ser-252, Ser-307, and Ser-314. The segment covering Glu-303 to Pro-315 has biased composition (basic and acidic residues). Residues Ser-337–Pro-359 are compositionally biased toward low complexity. Position 434 is a phosphoserine (Ser-434). Glycyl lysine isopeptide (Lys-Gly) (interchain with G-Cter in SUMO2) cross-links involve residues Lys-459 and Lys-516. The segment at Tyr-616 to Tyr-635 adopts a C2H2-type 1; degenerate zinc-finger fold. The C2H2-type 2; degenerate zinc finger occupies Leu-754–Thr-779. 5 consecutive C2H2-type zinc fingers follow at residues Lys-783–His-805, Phe-842–His-865, Tyr-870–His-893, Tyr-905–His-927, and Phe-936–His-959. Lys-980 participates in a covalent cross-link: Glycyl lysine isopeptide (Lys-Gly) (interchain with G-Cter in SUMO2). The segment at Thr-983–Thr-1017 is disordered. Positions Asn-990 to Thr-1017 are enriched in basic and acidic residues. 2 C2H2-type zinc fingers span residues Trp-1025–His-1048 and His-1055–His-1078. The C2H2-type 10; degenerate zinc finger occupies Tyr-1085–His-1111. Phosphoserine is present on Ser-1140. Glycyl lysine isopeptide (Lys-Gly) (interchain with G-Cter in SUMO2) cross-links involve residues Lys-1144 and Lys-1167. The segment at Tyr-1203 to His-1226 adopts a C2H2-type 11 zinc-finger fold. Residues Glu-1230–Asp-1263 form a disordered region. The C2H2-type 12 zinc-finger motif lies at Arg-1264–His-1286.

It belongs to the krueppel C2H2-type zinc-finger protein family.

Its subcellular location is the nucleus. May be involved in transcriptional regulation. This is Zinc finger protein 532 (ZNF532) from Homo sapiens (Human).